The sequence spans 30 residues: Photosystem I reaction center subunit XII (30 aa).

The chain crosses the membrane as a helical span at residues S5–G25.

Belongs to the PsaM family.

It localises to the plastid. The protein localises to the chloroplast thylakoid membrane. The protein is Photosystem I reaction center subunit XII of Emiliania huxleyi (Coccolithophore).